The chain runs to 107 residues: Anti-adapter protein IraM (107 aa).

The protein belongs to the IraM/RssC family.

Its subcellular location is the cytoplasm. In terms of biological role, inhibits RpoS proteolysis by regulating RssB activity, thereby increasing the stability of the sigma stress factor RpoS during magnesium starvation. This Shigella dysenteriae serotype 1 (strain Sd197) protein is Anti-adapter protein IraM.